We begin with the raw amino-acid sequence, 98 residues long: NADH-ubiquinone oxidoreductase chain 4L (98 aa).

3 consecutive transmembrane segments (helical) span residues 1-21 (MSLI…GLLM), 26-46 (LMSA…FTTL), and 61-81 (IILL…LVMI).

Belongs to the complex I subunit 4L family. As to quaternary structure, core subunit of respiratory chain NADH dehydrogenase (Complex I) which is composed of 45 different subunits.

Its subcellular location is the mitochondrion inner membrane. It catalyses the reaction a ubiquinone + NADH + 5 H(+)(in) = a ubiquinol + NAD(+) + 4 H(+)(out). In terms of biological role, core subunit of the mitochondrial membrane respiratory chain NADH dehydrogenase (Complex I) which catalyzes electron transfer from NADH through the respiratory chain, using ubiquinone as an electron acceptor. Part of the enzyme membrane arm which is embedded in the lipid bilayer and involved in proton translocation. The polypeptide is NADH-ubiquinone oxidoreductase chain 4L (MT-ND4L) (Physeter macrocephalus (Sperm whale)).